Reading from the N-terminus, the 672-residue chain is tRNA 5-methylaminomethyl-2-thiouridine biosynthesis bifunctional protein MnmC (672 aa).

The segment at 1–243 is tRNA (mnm(5)s(2)U34)-methyltransferase; sequence MTSIKNAELG…KREMIAGSME (243 aa). Residues 269–672 are FAD-dependent cmnm(5)s(2)U34 oxidoreductase; the sequence is IGGGIASAAL…LRKGKAITEL (404 aa).

It in the N-terminal section; belongs to the methyltransferase superfamily. tRNA (mnm(5)s(2)U34)-methyltransferase family. The protein in the C-terminal section; belongs to the DAO family. FAD is required as a cofactor.

The protein resides in the cytoplasm. It catalyses the reaction 5-aminomethyl-2-thiouridine(34) in tRNA + S-adenosyl-L-methionine = 5-methylaminomethyl-2-thiouridine(34) in tRNA + S-adenosyl-L-homocysteine + H(+). In terms of biological role, catalyzes the last two steps in the biosynthesis of 5-methylaminomethyl-2-thiouridine (mnm(5)s(2)U) at the wobble position (U34) in tRNA. Catalyzes the FAD-dependent demodification of cmnm(5)s(2)U34 to nm(5)s(2)U34, followed by the transfer of a methyl group from S-adenosyl-L-methionine to nm(5)s(2)U34, to form mnm(5)s(2)U34. This Vibrio campbellii (strain ATCC BAA-1116) protein is tRNA 5-methylaminomethyl-2-thiouridine biosynthesis bifunctional protein MnmC.